An 846-amino-acid polypeptide reads, in one-letter code: Translation initiation factor IF-2 (846 aa).

The disordered stretch occupies residues Tyr-198–Lys-219. Positions Ser-207–Lys-219 are enriched in basic residues. Residues Ser-345–Glu-512 form the tr-type G domain. Positions Gly-354–Thr-361 are G1. Gly-354–Thr-361 contributes to the GTP binding site. The interval Gly-379–His-383 is G2. Residues Asp-400–Gly-403 are G3. Residues Asp-400–His-404 and Asn-454–Asp-457 contribute to the GTP site. The G4 stretch occupies residues Asn-454–Asp-457. Positions Ser-490–Lys-492 are G5.

It belongs to the TRAFAC class translation factor GTPase superfamily. Classic translation factor GTPase family. IF-2 subfamily.

The protein resides in the cytoplasm. Its function is as follows. One of the essential components for the initiation of protein synthesis. Protects formylmethionyl-tRNA from spontaneous hydrolysis and promotes its binding to the 30S ribosomal subunits. Also involved in the hydrolysis of GTP during the formation of the 70S ribosomal complex. The polypeptide is Translation initiation factor IF-2 (Francisella tularensis subsp. tularensis (strain SCHU S4 / Schu 4)).